The chain runs to 439 residues: Protein translocase subunit SecY (439 aa).

10 consecutive transmembrane segments (helical) span residues 19–39, 68–88, 116–136, 151–171, 176–196, 216–236, 269–289, 312–332, 373–393, and 396–416; these read ILFT…TVPG, YSLF…VQLL, YITL…FQAM, LMIG…GEQI, FGSG…PSAV, WLFV…TTFV, VIPV…LQFL, WTGM…YSFV, VGAL…NVWG, and KIVA…IQAV.

It belongs to the SecY/SEC61-alpha family. As to quaternary structure, component of the Sec protein translocase complex. Heterotrimer consisting of SecY, SecE and SecG subunits. The heterotrimers can form oligomers, although 1 heterotrimer is thought to be able to translocate proteins. Interacts with the ribosome. Interacts with SecDF, and other proteins may be involved. Interacts with SecA.

The protein resides in the cell membrane. The central subunit of the protein translocation channel SecYEG. Consists of two halves formed by TMs 1-5 and 6-10. These two domains form a lateral gate at the front which open onto the bilayer between TMs 2 and 7, and are clamped together by SecE at the back. The channel is closed by both a pore ring composed of hydrophobic SecY resides and a short helix (helix 2A) on the extracellular side of the membrane which forms a plug. The plug probably moves laterally to allow the channel to open. The ring and the pore may move independently. The chain is Protein translocase subunit SecY from Lactococcus lactis subsp. lactis (strain IL1403) (Streptococcus lactis).